The chain runs to 252 residues: Major prion protein (252 aa).

A signal peptide spans Met1–Pro28. The tract at residues Lys23 to Ala229 is interaction with GRB2, ERI3 and SYN1. Residues Pro26–Lys109 form a disordered region. 5 tandem repeats follow at residues Pro51–Gln59, Pro60–Gln67, Pro68–Gln75, Pro76–Gln83, and Pro84–Gly92. The 5 X 8 AA tandem repeats of P-H-G-G-G-W-G-Q stretch occupies residues Pro51–Gly92. A compositionally biased stretch (gly residues) spans Gln53–Gly93. Cu(2+) contacts are provided by His61, Gly62, Gly63, His69, Gly70, Gly71, His77, Gly78, Gly79, His85, Gly86, and Gly87. Cys178 and Cys213 are oxidised to a cystine. N-linked (GlcNAc...) asparagine glycans are attached at residues Asn180 and Asn196. A lipid anchor (GPI-anchor amidated alanine) is attached at Ala229. A propeptide spans Gly230–Gly252 (removed in mature form).

Belongs to the prion family. As to quaternary structure, monomer and homodimer. Has a tendency to aggregate into amyloid fibrils containing a cross-beta spine, formed by a steric zipper of superposed beta-strands. Soluble oligomers may represent an intermediate stage on the path to fibril formation. Copper binding may promote oligomerization. Interacts with GRB2, APP, ERI3/PRNPIP and SYN1. Mislocalized cytosolically exposed PrP interacts with MGRN1; this interaction alters MGRN1 subcellular location and causes lysosomal enlargement. Interacts with KIAA1191.

The protein resides in the cell membrane. The protein localises to the golgi apparatus. Functionally, its primary physiological function is unclear. Has cytoprotective activity against internal or environmental stresses. May play a role in neuronal development and synaptic plasticity. May be required for neuronal myelin sheath maintenance. May play a role in iron uptake and iron homeostasis. Soluble oligomers are toxic to cultured neuroblastoma cells and induce apoptosis (in vitro). Association with GPC1 (via its heparan sulfate chains) targets PRNP to lipid rafts. Also provides Cu(2+) or Zn(2+) for the ascorbate-mediated GPC1 deaminase degradation of its heparan sulfate side chains. The polypeptide is Major prion protein (PRNP) (Oryctolagus cuniculus (Rabbit)).